The primary structure comprises 398 residues: MAIEHASSIKKVKNFTLNFGPQHPAAHGVLRLVLELNGEVVARADPHIGLLHRGTEKLIEYKTYTQALPYFDRLDYVSMMCQEHAYSLAVEKLLHCEVPERAQYIRVLFSEITRILNHLLALTTHAMDVGALTPFLWAFEEREKLIEFYERVSGSRMHAAYIRPGGVACDLPANLCEDIYLFCQQFASRIDEMEEMLTNNRIWKQRLVDIGIVTAENAFAWGFSGVLLRGSGVAWDLRKTQPYDVYNRMIFDVPVGTQGDCYDRYLCRVEEMRQSIHIIMQCLNQLPKGMIKADDKKITPPSRSQMKQSMESLIHHFKLFTEGYTVPNSETYTSVEAPKGEFGVYLVSNGTNRPYRCKIRAPGFLHLQGLDMMSKNHMLADVVTIIGTQDIVFGEVDR.

[4Fe-4S] cluster contacts are provided by Cys-261, Cys-267, and Cys-282.

It belongs to the complex I 49 kDa subunit family. As to quaternary structure, complex I is composed of about 45 different subunits. This is a component of the iron-sulfur (IP) fragment of the enzyme. [4Fe-4S] cluster is required as a cofactor.

Its subcellular location is the mitochondrion. The enzyme catalyses a ubiquinone + NADH + 5 H(+)(in) = a ubiquinol + NAD(+) + 4 H(+)(out). Its function is as follows. Core subunit of the mitochondrial membrane respiratory chain NADH dehydrogenase (Complex I) that is believed to belong to the minimal assembly required for catalysis. Complex I functions in the transfer of electrons from NADH to the respiratory chain. The immediate electron acceptor for the enzyme is believed to be ubiquinone. Component of the iron-sulfur (IP) fragment of the enzyme. In Nephroselmis olivacea (Green alga), this protein is NADH dehydrogenase [ubiquinone] iron-sulfur protein 2 (NAD7).